The chain runs to 440 residues: MGPPGSPWQWVPLLLGLLLPPAAPFWLLNVLFPPHTTPKAELSNHTRPVILVPGCLGNQLEAKLDKPDVVNWMCYRKTEDFFTIWLDLNMFLPLGVDCWIDNTRVVYNRSSGLVSNAPGVQIRVPGFGKTYSVEYLDSSKLAGYLHTLVQNLVNNGYVRDETVRAAPYDWRLEPGQQEEYYHKLAGLVEEMHAAYGKPVFLIGHSLGCLHLLYFLLRQPQAWKDRFIDGFISLGAPWGGSIKPMLVLASGDNQGIPIMSSIKLKEEQRITTTSPWMFPSRLAWPEDHVFISTPSFNYTGRDFQRFFADLHFEEGWYMWLQSRDLLAGLPAPGVEVYCLYGVGLPTPRTYIYDHGFPYTDPVDVLYEDGDDTVATRSTELCGLWQGRQPQPVHLLPLRGIQHLNMVFSNQTLEHINAILLGAYRQGPPASLTASPEPPPPE.

The N-terminal stretch at 1–24 is a signal peptide; the sequence is MGPPGSPWQWVPLLLGLLLPPAAP. The N-linked (GlcNAc...) asparagine glycan is linked to Asn44. Cys74 and Cys98 are disulfide-bonded. Asn108 carries an N-linked (GlcNAc...) asparagine glycan. The Nucleophile role is filled by Ser205. Asn296 carries N-linked (GlcNAc...) asparagine glycosylation. A disulfide bond links Cys337 and Cys380. Catalysis depends on charge relay system residues Asp369 and His401. N-linked (GlcNAc...) asparagine glycosylation is present at Asn408.

This sequence belongs to the AB hydrolase superfamily. Lipase family. As to expression, most abundant in liver and cerebellum.

It localises to the secreted. It carries out the reaction a sterol + a 1,2-diacyl-sn-glycero-3-phosphocholine = a sterol ester + a 1-acyl-sn-glycero-3-phosphocholine. APOA1 is the most potent activator in plasma. Also activated by APOE, APOC1 and APOA4. Functionally, central enzyme in the extracellular metabolism of plasma lipoproteins. Synthesized mainly in the liver and secreted into plasma where it converts cholesterol and phosphatidylcholines (lecithins) to cholesteryl esters and lysophosphatidylcholines on the surface of high and low density lipoproteins (HDLs and LDLs). The cholesterol ester is then transported back to the liver. Has a preference for plasma 16:0-18:2 or 18:O-18:2 phosphatidylcholines. Also produced in the brain by primary astrocytes, and esterifies free cholesterol on nascent APOE-containing lipoproteins secreted from glia and influences cerebral spinal fluid (CSF) APOE- and APOA1 levels. Together with APOE and the cholesterol transporter ABCA1, plays a key role in the maturation of glial-derived, nascent lipoproteins. Required for remodeling high-density lipoprotein particles into their spherical forms. The sequence is that of Phosphatidylcholine-sterol acyltransferase (LCAT) from Papio anubis (Olive baboon).